The sequence spans 4582 residues: Probable transcription-associated protein 1 (4582 aa).

Over residues 1-11 (MSTNPPQPPPS) the composition is skewed to pro residues. Disordered stretches follow at residues 1–52 (MSTN…SSGN), 219–276 (TTTA…TTTT), 556–581 (KEKE…ANTT), 794–821 (VGGS…TNSN), 1152–1195 (ENEN…NNNI), 1483–1570 (QSTT…STIN), 2341–2410 (SIKT…NIDD), 2537–2567 (TTTT…QVTK), 2637–2662 (SDGG…GGAS), and 2741–2789 (SPST…TTTE). Positions 25-37 (PMSTTNPSQPTIT) are enriched in polar residues. Low complexity-rich tracts occupy residues 38–50 (SSSA…SSSS), 219–250 (TTTA…NTIT), and 258–276 (PSTT…TTTT). Residues 556-573 (KEKEKELKDPQSLKDKLD) are compositionally biased toward basic and acidic residues. Over residues 794–811 (VGGSGGSNSSGGGGGGGS) the composition is skewed to gly residues. Composition is skewed to low complexity over residues 812-821 (NSSNNSTNSN), 1158-1194 (DNNN…NNNN), 1484-1504 (STTT…ETAT), 1515-1568 (TEPT…SSST), and 2341-2367 (SIKT…DSSS). Polar residues predominate over residues 2378 to 2398 (SITTPSQGGVATPNVSDSTPT). Composition is skewed to low complexity over residues 2537 to 2556 (TTTT…DSSS) and 2650 to 2662 (SSSG…GGAS). The stretch at 2944–2991 (NDINQQQQQQQQQQQQQQQQQQQQQQQQQQQQQQQQQQQQQQHHQQEQ) forms a coiled coil. The 631-residue stretch at 3185–3815 (VISFLGENYN…YYHFRKLVLE (631 aa)) folds into the FAT domain. Low complexity-rich tracts occupy residues 3491-3509 (TNTT…TTTT) and 3824-3916 (TTSP…ANTT). Disordered regions lie at residues 3491 to 3517 (TNTT…PQQP) and 3821 to 3928 (SKFT…FSPL). The PI3K/PI4K catalytic domain maps to 4171-4541 (VCPRITLYGG…MLENRIDSLT (371 aa)). The tract at residues 4177–4183 (LYGGNGK) is G-loop. The segment at 4312–4337 (NITEDNNISSSSSSSSSSGSNSGENS) is disordered. Over residues 4320 to 4337 (SSSSSSSSSSGSNSGENS) the composition is skewed to low complexity. The segment at 4400–4408 (DIGDIDPSK) is catalytic loop. The activation loop stretch occupies residues 4429 to 4451 (NRKLGFDLLQDNPYNQQQLLRLS). Positions 4538 to 4582 (DSLTPSSQPDKTCFISPIVKKVNQLIQNSLSSNISQLDQLSCPWL) constitute an FATC domain.

It belongs to the PI3/PI4-kinase family. TRA1 subfamily.

The chain is Probable transcription-associated protein 1 (tra1) from Dictyostelium discoideum (Social amoeba).